Here is a 354-residue protein sequence, read N- to C-terminus: UDP-N-acetylglucosamine--N-acetylmuramyl-(pentapeptide) pyrophosphoryl-undecaprenol N-acetylglucosamine transferase (354 aa).

UDP-N-acetyl-alpha-D-glucosamine contacts are provided by residues 11-13 (TAG), Arg164, Ser194, and Gln289.

The protein belongs to the glycosyltransferase 28 family. MurG subfamily.

It is found in the cell membrane. It catalyses the reaction di-trans,octa-cis-undecaprenyl diphospho-N-acetyl-alpha-D-muramoyl-L-alanyl-D-glutamyl-meso-2,6-diaminopimeloyl-D-alanyl-D-alanine + UDP-N-acetyl-alpha-D-glucosamine = di-trans,octa-cis-undecaprenyl diphospho-[N-acetyl-alpha-D-glucosaminyl-(1-&gt;4)]-N-acetyl-alpha-D-muramoyl-L-alanyl-D-glutamyl-meso-2,6-diaminopimeloyl-D-alanyl-D-alanine + UDP + H(+). It functions in the pathway cell wall biogenesis; peptidoglycan biosynthesis. Its function is as follows. Cell wall formation. Catalyzes the transfer of a GlcNAc subunit on undecaprenyl-pyrophosphoryl-MurNAc-pentapeptide (lipid intermediate I) to form undecaprenyl-pyrophosphoryl-MurNAc-(pentapeptide)GlcNAc (lipid intermediate II). This Clostridium botulinum (strain Loch Maree / Type A3) protein is UDP-N-acetylglucosamine--N-acetylmuramyl-(pentapeptide) pyrophosphoryl-undecaprenol N-acetylglucosamine transferase.